The following is a 184-amino-acid chain: Photosystem I assembly protein Ycf4 (184 aa).

The next 2 membrane-spanning stretches (helical) occupy residues 22–42 and 57–77; these read FCWA…GISS and ILFF…LFIS.

This sequence belongs to the Ycf4 family.

The protein localises to the plastid. It is found in the chloroplast thylakoid membrane. Its function is as follows. Seems to be required for the assembly of the photosystem I complex. The protein is Photosystem I assembly protein Ycf4 of Populus trichocarpa (Western balsam poplar).